A 136-amino-acid chain; its full sequence is C-type natriuretic peptide prohormone (136 aa).

The N-terminal stretch at 1-21 is a signal peptide; the sequence is MSGQTSFYCGLLLVLLIQAQA. Residues C120 and C136 are joined by a disulfide bond.

The protein belongs to the natriuretic peptide family. CNP-115 is differentially processed to produce CNP-38 and CNP-39 in the heart and CNP-22 in the brain.

The protein localises to the secreted. Hormone which may be vasoactive and natriuretic. Has a cGMP-stimulating activity. This chain is C-type natriuretic peptide prohormone, found in Triakis scyllium (Banded houndshark).